We begin with the raw amino-acid sequence, 183 residues long: Ribosome-recycling factor (183 aa).

Belongs to the RRF family.

It is found in the cytoplasm. Responsible for the release of ribosomes from messenger RNA at the termination of protein biosynthesis. May increase the efficiency of translation by recycling ribosomes from one round of translation to another. The sequence is that of Ribosome-recycling factor from Mycoplasma mobile (strain ATCC 43663 / 163K / NCTC 11711) (Mesomycoplasma mobile).